Consider the following 188-residue polypeptide: Protein-L-isoaspartate O-methyltransferase (188 aa).

Ser-33 is a catalytic residue.

It belongs to the methyltransferase superfamily. L-isoaspartyl/D-aspartyl protein methyltransferase family.

Its subcellular location is the cytoplasm. It catalyses the reaction [protein]-L-isoaspartate + S-adenosyl-L-methionine = [protein]-L-isoaspartate alpha-methyl ester + S-adenosyl-L-homocysteine. Catalyzes the methyl esterification of L-isoaspartyl residues in peptides and proteins that result from spontaneous decomposition of normal L-aspartyl and L-asparaginyl residues. It plays a role in the repair and/or degradation of damaged proteins. In Methanocella arvoryzae (strain DSM 22066 / NBRC 105507 / MRE50), this protein is Protein-L-isoaspartate O-methyltransferase.